The chain runs to 134 residues: Early E3B 14.9 kDa protein (134 aa).

The signal sequence occupies residues 1 to 19 (MQAMLPVILILLLPCIALA). The helical transmembrane segment at 54–78 (YWIVIVGIINILSCTFFSITIYPTF) threads the bilayer.

It belongs to the adenoviridae E3_14 family. In terms of processing, phosphorylated on serine; O-glycosylated, but not N-glycosylated.

The protein localises to the host membrane. Down-regulates the EGF receptor and prevents cytolysis by TNF. This is Early E3B 14.9 kDa protein from Homo sapiens (Human).